The sequence spans 609 residues: Replication protein A 70 kDa DNA-binding subunit (609 aa).

The interval 113-163 is disordered; it reads GNPQPYNDGQPQPAAPAPASAPAPAPSKLQNNSAPPPSMNRGTSKLFGGGS. Positions 125-137 are enriched in pro residues; that stretch reads PAAPAPASAPAPA. Positions 188–272 form a DNA-binding region, OB; sequence WTVRARVTNK…VKNDYEMTFN (85 aa). The C4-type zinc finger occupies 472–494; sequence CPSQDCNKKVIDQQNGLFRCEKC.

Belongs to the replication factor A protein 1 family. In terms of assembly, component of the heterotrimeric canonical replication protein A complex (RPA). Interacts with rpain-a.

It localises to the nucleus. The protein localises to the PML body. Functionally, as part of the heterotrimeric replication protein A complex (RPA/RP-A), binds and stabilizes single-stranded DNA intermediates, that form during DNA replication or upon DNA stress. It prevents their reannealing and in parallel, recruits and activates different proteins and complexes involved in DNA metabolism. Thereby, it plays an essential role both in DNA replication and the cellular response to DNA damage. This Xenopus laevis (African clawed frog) protein is Replication protein A 70 kDa DNA-binding subunit (rpa1).